The following is a 126-amino-acid chain: Protein ApaG (126 aa).

In terms of domain architecture, ApaG spans 2-126 (SDPRYQVDVS…FRLAVPGALH (125 aa)).

This chain is Protein ApaG, found in Pseudomonas fluorescens (strain ATCC BAA-477 / NRRL B-23932 / Pf-5).